Reading from the N-terminus, the 327-residue chain is Cobalamin biosynthesis protein CobD (327 aa).

The next 4 membrane-spanning stretches (helical) occupy residues 63-83 (VGIL…ARLF), 84-104 (DVLG…FLAQ), 158-178 (FSDG…PGLL), and 305-325 (VFYA…LPLL).

It belongs to the CobD/CbiB family.

The protein localises to the cell membrane. The protein operates within cofactor biosynthesis; adenosylcobalamin biosynthesis. In terms of biological role, converts cobyric acid to cobinamide by the addition of aminopropanol on the F carboxylic group. This is Cobalamin biosynthesis protein CobD from Rhizobium meliloti (strain 1021) (Ensifer meliloti).